The following is a 181-amino-acid chain: ATP synthase subunit delta (181 aa).

Belongs to the ATPase delta chain family. F-type ATPases have 2 components, F(1) - the catalytic core - and F(0) - the membrane proton channel. F(1) has five subunits: alpha(3), beta(3), gamma(1), delta(1), epsilon(1). F(0) has three main subunits: a(1), b(2) and c(10-14). The alpha and beta chains form an alternating ring which encloses part of the gamma chain. F(1) is attached to F(0) by a central stalk formed by the gamma and epsilon chains, while a peripheral stalk is formed by the delta and b chains.

The protein localises to the cell membrane. Functionally, f(1)F(0) ATP synthase produces ATP from ADP in the presence of a proton or sodium gradient. F-type ATPases consist of two structural domains, F(1) containing the extramembraneous catalytic core and F(0) containing the membrane proton channel, linked together by a central stalk and a peripheral stalk. During catalysis, ATP synthesis in the catalytic domain of F(1) is coupled via a rotary mechanism of the central stalk subunits to proton translocation. In terms of biological role, this protein is part of the stalk that links CF(0) to CF(1). It either transmits conformational changes from CF(0) to CF(1) or is implicated in proton conduction. This Clostridium kluyveri (strain NBRC 12016) protein is ATP synthase subunit delta.